A 209-amino-acid chain; its full sequence is MARYIGPTCKLARREGADLSLKSPARALDSKCKLEQKPGQHGATARKGKLSDYATQLREKQKVKRIYGLLERQFRNYYKKASTKKGNTGENLLQLLETRLDNVVYRMGFAVTRPAARQLVSHRGVTVNGKSVNLASYQVKAGDAIALSEKAAKQLRVQEALTVAAQHDLSPSWVEVDSGKFTGIFKAVPDRSDLPADINEALIVELYSK.

Residues 98–161 (TRLDNVVYRM…AKQLRVQEAL (64 aa)) enclose the S4 RNA-binding domain.

The protein belongs to the universal ribosomal protein uS4 family. Part of the 30S ribosomal subunit. Contacts protein S5. The interaction surface between S4 and S5 is involved in control of translational fidelity.

In terms of biological role, one of the primary rRNA binding proteins, it binds directly to 16S rRNA where it nucleates assembly of the body of the 30S subunit. Its function is as follows. With S5 and S12 plays an important role in translational accuracy. The protein is Small ribosomal subunit protein uS4 of Stenotrophomonas maltophilia (strain R551-3).